A 289-amino-acid polypeptide reads, in one-letter code: Bifunctional protein FolD (289 aa).

Residues 166-168, serine 191, and isoleucine 232 each bind NADP(+); that span reads GRS.

Belongs to the tetrahydrofolate dehydrogenase/cyclohydrolase family. In terms of assembly, homodimer.

The catalysed reaction is (6R)-5,10-methylene-5,6,7,8-tetrahydrofolate + NADP(+) = (6R)-5,10-methenyltetrahydrofolate + NADPH. It catalyses the reaction (6R)-5,10-methenyltetrahydrofolate + H2O = (6R)-10-formyltetrahydrofolate + H(+). Its pathway is one-carbon metabolism; tetrahydrofolate interconversion. Catalyzes the oxidation of 5,10-methylenetetrahydrofolate to 5,10-methenyltetrahydrofolate and then the hydrolysis of 5,10-methenyltetrahydrofolate to 10-formyltetrahydrofolate. The sequence is that of Bifunctional protein FolD from Synechococcus elongatus (strain ATCC 33912 / PCC 7942 / FACHB-805) (Anacystis nidulans R2).